Consider the following 478-residue polypeptide: Alpha-1,3-mannosyl-glycoprotein 4-beta-N-acetylglucosaminyltransferase C (478 aa).

The Cytoplasmic segment spans residues 1-23; the sequence is MFKFHQMKHIFEILDKMRCLRKR. The helical; Signal-anchor for type II membrane protein transmembrane segment at 24-44 threads the bilayer; it reads STVSFLGVLVIFLLFMNLYIE. The Lumenal segment spans residues 45–478; sequence DSYVLEGDKQ…IIRSISIWTS (434 aa). 2 N-linked (GlcNAc...) asparagine glycosylation sites follow: Asn-84 and Asn-215.

This sequence belongs to the glycosyltransferase 54 family. A divalent metal cation serves as cofactor.

The protein resides in the golgi apparatus membrane. The enzyme catalyses N(4)-{beta-D-GlcNAc-(1-&gt;2)-alpha-D-Man-(1-&gt;3)-[beta-D-GlcNAc-(1-&gt;2)-alpha-D-Man-(1-&gt;6)]-beta-D-Man-(1-&gt;4)-beta-D-GlcNAc-(1-&gt;4)-beta-D-GlcNAc}-L-asparaginyl-[protein] + UDP-N-acetyl-alpha-D-glucosamine = N(4)-{beta-D-GlcNAc-(1-&gt;2)-[beta-D-GlcNAc-(1-&gt;4)]-alpha-D-Man-(1-&gt;3)-[beta-D-GlcNAc-(1-&gt;2)-alpha-D-Man-(1-&gt;6)]-beta-D-Man-(1-&gt;4)-beta-D-GlcNAc-(1-&gt;4)-beta-D-GlcNAc}-L-asparaginyl-[protein] + UDP + H(+). It participates in protein modification; protein glycosylation. Functionally, glycosyltransferase that participates in the transfer of N-acetylglucosamine (GlcNAc) to the core mannose residues of N-linked glycans. Catalyzes the formation of the GlcNAcbeta1-4 branch on the GlcNAcbeta1-2Manalpha1-3 arm of the core structure of N-linked glycans. Essential for the production of tri- and tetra-antennary N-linked sugar chains. Does not catalyze the transfer of GlcNAc to the Manalpha1-6 arm to form GlcNAcBeta1-4Manalpha1-6 linkage ('GnT-VI' activity). The sequence is that of Alpha-1,3-mannosyl-glycoprotein 4-beta-N-acetylglucosaminyltransferase C (MGAT4C) from Macaca fascicularis (Crab-eating macaque).